A 529-amino-acid polypeptide reads, in one-letter code: N5-hydroxyornithine acetylase sidL (529 aa).

Disordered regions lie at residues 59–95 (ASVN…VRPF) and 239–258 (SPWP…SPVA). Position 462 (H462) interacts with substrate. The active-site Proton acceptor is E498.

The protein belongs to the lysine N-acyltransferase mbtK family.

It localises to the cytoplasm. Its subcellular location is the cytosol. The protein operates within siderophore biosynthesis. Acyltransferase; part of the gene cluster that mediates the biosynthesis of at least 11 siderophores, including beauverichelin A, dimerumic acid (DA), Na-dimethyl coprogen (NADC), eleutherazine B, ferricrocin (FC), fusarinine A, fusarinine C (FsC), metachelin A, mevalonolactone, rhodotorulic acid (RA) and tenellin. This cocktail of siderophores for iron metabolism is essential for virulence, and more specifically for the fungal virulence in penetrating through the host cuticle. Siderophore synthesis is also involved in conidial germination under iron-deficient conditions. SIDL contributes to partial production of ferricrocin under iron-limiting conditions via the acetylation of N(5)-hydroxyornithine. The protein is N5-hydroxyornithine acetylase sidL of Beauveria bassiana (strain ARSEF 2860) (White muscardine disease fungus).